The primary structure comprises 494 residues: Alpha-amylase-related protein (494 aa).

A signal peptide spans 1–20; it reads MIKFALALTLCLAGASLSLA. Gln-21 is subject to Pyrrolidone carboxylic acid. Cys-48 and Cys-104 are oxidised to a cystine. 3 residues coordinate Ca(2+): Asn-118, Gln-169, and Asp-178. Cys-157 and Cys-171 are disulfide-bonded. Arg-206 contributes to the chloride binding site. The Nucleophile role is filled by Asp-208. Residue His-212 participates in Ca(2+) binding. The active-site Proton donor is Glu-245. Chloride is bound by residues Asn-308 and Arg-343. 3 disulfide bridges follow: Cys-376/Cys-382, Cys-418/Cys-441, and Cys-448/Cys-460.

The protein belongs to the glycosyl hydrolase 13 family. Monomer. Ca(2+) serves as cofactor. Requires chloride as cofactor.

The protein localises to the secreted. The enzyme catalyses Endohydrolysis of (1-&gt;4)-alpha-D-glucosidic linkages in polysaccharides containing three or more (1-&gt;4)-alpha-linked D-glucose units.. The chain is Alpha-amylase-related protein (Amyrel) from Drosophila lini (Fruit fly).